Reading from the N-terminus, the 695-residue chain is UvrABC system protein B (695 aa).

The region spanning 45–434 is the Helicase ATP-binding domain; the sequence is EGIEDGLSFQ…QVVEQVVRPT (390 aa). 58 to 65 serves as a coordination point for ATP; it reads GVTGSGKT. The Beta-hairpin motif lies at 111–134; it reads YYDYYQPEAYVPQRDLFIEKDSSI. One can recognise a Helicase C-terminal domain in the interval 449-602; that stretch reads QVDDLLSEIN…QMAFNEANGI (154 aa). One can recognise a UVR domain in the interval 646–681; sequence SKEIKRLEKLMMDHAKNLEFEKAAQVRDQLAKLKAQ.

Belongs to the UvrB family. In terms of assembly, forms a heterotetramer with UvrA during the search for lesions. Interacts with UvrC in an incision complex.

It is found in the cytoplasm. The UvrABC repair system catalyzes the recognition and processing of DNA lesions. A damage recognition complex composed of 2 UvrA and 2 UvrB subunits scans DNA for abnormalities. Upon binding of the UvrA(2)B(2) complex to a putative damaged site, the DNA wraps around one UvrB monomer. DNA wrap is dependent on ATP binding by UvrB and probably causes local melting of the DNA helix, facilitating insertion of UvrB beta-hairpin between the DNA strands. Then UvrB probes one DNA strand for the presence of a lesion. If a lesion is found the UvrA subunits dissociate and the UvrB-DNA preincision complex is formed. This complex is subsequently bound by UvrC and the second UvrB is released. If no lesion is found, the DNA wraps around the other UvrB subunit that will check the other stand for damage. This Cupriavidus pinatubonensis (strain JMP 134 / LMG 1197) (Cupriavidus necator (strain JMP 134)) protein is UvrABC system protein B.